The chain runs to 212 residues: Imidazole glycerol phosphate synthase subunit HisH (212 aa).

The Glutamine amidotransferase type-1 domain occupies 2 to 212; that stretch reads KVAVIDYGMG…KNFLAWDGNV (211 aa). Cys-82 serves as the catalytic Nucleophile. Active-site residues include His-190 and Glu-192.

Heterodimer of HisH and HisF.

Its subcellular location is the cytoplasm. It catalyses the reaction 5-[(5-phospho-1-deoxy-D-ribulos-1-ylimino)methylamino]-1-(5-phospho-beta-D-ribosyl)imidazole-4-carboxamide + L-glutamine = D-erythro-1-(imidazol-4-yl)glycerol 3-phosphate + 5-amino-1-(5-phospho-beta-D-ribosyl)imidazole-4-carboxamide + L-glutamate + H(+). It carries out the reaction L-glutamine + H2O = L-glutamate + NH4(+). Its pathway is amino-acid biosynthesis; L-histidine biosynthesis; L-histidine from 5-phospho-alpha-D-ribose 1-diphosphate: step 5/9. IGPS catalyzes the conversion of PRFAR and glutamine to IGP, AICAR and glutamate. The HisH subunit catalyzes the hydrolysis of glutamine to glutamate and ammonia as part of the synthesis of IGP and AICAR. The resulting ammonia molecule is channeled to the active site of HisF. The protein is Imidazole glycerol phosphate synthase subunit HisH of Chromobacterium violaceum (strain ATCC 12472 / DSM 30191 / JCM 1249 / CCUG 213 / NBRC 12614 / NCIMB 9131 / NCTC 9757 / MK).